The chain runs to 93 residues: Acylphosphatase (93 aa).

C5 and C49 are disulfide-bonded. An Acylphosphatase-like domain is found at 5 to 93 (CTIAWIYGRV…ETLTDFSIRY (89 aa)). Active-site residues include R20 and N38.

The protein belongs to the acylphosphatase family.

The enzyme catalyses an acyl phosphate + H2O = a carboxylate + phosphate + H(+). This Salmonella arizonae (strain ATCC BAA-731 / CDC346-86 / RSK2980) protein is Acylphosphatase.